The following is a 321-amino-acid chain: Eukaryotic translation initiation factor 3 subunit I (321 aa).

WD repeat units lie at residues G8 to T47, G50 to K89, V140 to S179, E182 to T221, and G279 to E318.

This sequence belongs to the eIF-3 subunit I family. Component of the eukaryotic translation initiation factor 3 (eIF-3) complex.

The protein resides in the cytoplasm. Its function is as follows. Component of the eukaryotic translation initiation factor 3 (eIF-3) complex, which is involved in protein synthesis of a specialized repertoire of mRNAs and, together with other initiation factors, stimulates binding of mRNA and methionyl-tRNAi to the 40S ribosome. The eIF-3 complex specifically targets and initiates translation of a subset of mRNAs involved in cell proliferation. The sequence is that of Eukaryotic translation initiation factor 3 subunit I from Nematostella vectensis (Starlet sea anemone).